Reading from the N-terminus, the 63-residue chain is Large ribosomal subunit protein uL30 (63 aa).

It belongs to the universal ribosomal protein uL30 family. In terms of assembly, part of the 50S ribosomal subunit.

The polypeptide is Large ribosomal subunit protein uL30 (Xylella fastidiosa (strain 9a5c)).